A 236-amino-acid chain; its full sequence is Phosphoribosylaminoimidazole-succinocarboxamide synthase (236 aa).

This sequence belongs to the SAICAR synthetase family.

The catalysed reaction is 5-amino-1-(5-phospho-D-ribosyl)imidazole-4-carboxylate + L-aspartate + ATP = (2S)-2-[5-amino-1-(5-phospho-beta-D-ribosyl)imidazole-4-carboxamido]succinate + ADP + phosphate + 2 H(+). Its pathway is purine metabolism; IMP biosynthesis via de novo pathway; 5-amino-1-(5-phospho-D-ribosyl)imidazole-4-carboxamide from 5-amino-1-(5-phospho-D-ribosyl)imidazole-4-carboxylate: step 1/2. In Campylobacter jejuni (strain RM1221), this protein is Phosphoribosylaminoimidazole-succinocarboxamide synthase.